Reading from the N-terminus, the 114-residue chain is Iron-sulfur cluster insertion protein ErpA (114 aa).

The iron-sulfur cluster site is built by Cys-42, Cys-106, and Cys-108.

It belongs to the HesB/IscA family. As to quaternary structure, homodimer. The cofactor is iron-sulfur cluster.

Required for insertion of 4Fe-4S clusters for at least IspG. The polypeptide is Iron-sulfur cluster insertion protein ErpA (Haemophilus ducreyi (strain 35000HP / ATCC 700724)).